Consider the following 505-residue polypeptide: Holliday junction branch migration ATPase PINA (505 aa).

The 105-residue stretch at 2-106 (NDLMLDKSAL…IVTADETQKK (105 aa)) folds into the PINc domain. The segment at 434 to 505 (PVNRGITMSN…NIKIKIKLSD (72 aa)) is KH domain. Residues 493–505 (KKNNIKIKIKLSD) form a required for maximum interaction with Hjc and Hjm region.

Homohexamer; the central pore (25-31 Angstroms) is large enough to hold dsDNA. In PDB:5F4H two of the 6 subunits are in an ATP-binding competent conformation. Interacts with Holliday junction resolvase Hjc; in the presence of HJ DNA this interaction decreases branch migration but not Y-DNA unwinding. Interacts with helicase Hjm (hel308) which decreases the DNA helicase activity of Hjm. Ca(2+) serves as cofactor.

It carries out the reaction ATP + H2O = ADP + phosphate + H(+). Its function is as follows. Promotes Holliday junction (HJ) branch migration and unwinds Y-shaped DNA (but not replication forks or dsDNA) in an ATP hydrolysis-dependent manner. Stimulates cleavage by HJ resolvase Hjc. Unwinds Y-shaped and 3'-flap DNA substrates. In the absence of other proteins stabilizes replication forks (prevents spontaneous unwinding); Hjc, Hjm (Hel308) and PINA coordinate HJ migration and cleavage of replication forks in a coordinated way. Inhibits the 5'-3' (but not 3'-5') helicase activity of helicase Hjm (Hel308) on overhang DNA. Probably acts as an ATP-dependent pump that pulls DNA through the hexamer. The sequence is that of Holliday junction branch migration ATPase PINA from Saccharolobus islandicus (strain REY15A) (Sulfolobus islandicus).